Consider the following 400-residue polypeptide: ATP phosphoribosyltransferase regulatory subunit (400 aa).

Belongs to the class-II aminoacyl-tRNA synthetase family. HisZ subfamily. In terms of assembly, heteromultimer composed of HisG and HisZ subunits.

The protein resides in the cytoplasm. The protein operates within amino-acid biosynthesis; L-histidine biosynthesis; L-histidine from 5-phospho-alpha-D-ribose 1-diphosphate: step 1/9. Required for the first step of histidine biosynthesis. May allow the feedback regulation of ATP phosphoribosyltransferase activity by histidine. This is ATP phosphoribosyltransferase regulatory subunit from Hahella chejuensis (strain KCTC 2396).